The sequence spans 567 residues: Urease subunit alpha (567 aa).

Positions 129–567 (GGIDTHIHWI…LPMAQRYFLF (439 aa)) constitute a Urease domain. Positions 134, 136, and 217 each coordinate Ni(2+). Position 217 is an N6-carboxylysine (K217). H219 is a binding site for substrate. H246 and H272 together coordinate Ni(2+). H320 serves as the catalytic Proton donor. D360 contributes to the Ni(2+) binding site.

The protein belongs to the metallo-dependent hydrolases superfamily. Urease alpha subunit family. Heterotrimer of UreA (gamma), UreB (beta) and UreC (alpha) subunits. Three heterotrimers associate to form the active enzyme. It depends on Ni cation as a cofactor. Carboxylation allows a single lysine to coordinate two nickel ions.

The protein resides in the cytoplasm. The enzyme catalyses urea + 2 H2O + H(+) = hydrogencarbonate + 2 NH4(+). The protein operates within nitrogen metabolism; urea degradation; CO(2) and NH(3) from urea (urease route): step 1/1. The sequence is that of Urease subunit alpha from Enterobacter sp. (strain 638).